We begin with the raw amino-acid sequence, 400 residues long: Putative zinc-binding protein ORF78 (400 aa).

A disordered region spans residues leucine 9–threonine 33.

The chain is Putative zinc-binding protein ORF78 (ORF78) from Ictalurid herpesvirus 1 (strain Auburn) (IcHV-1).